Reading from the N-terminus, the 427-residue chain is Adenylosuccinate synthetase (427 aa).

GTP is bound by residues G13–K19 and G41–T43. D14 (proton acceptor) is an active-site residue. Mg(2+)-binding residues include D14 and G41. IMP is bound by residues D14–K17, N39–H42, T129, R143, Q224, T239, and R303. H42 acts as the Proton donor in catalysis. Residues Q117–Y137 form a disordered region. Residue T299–R305 participates in substrate binding. Residues R305, K331–D333, and G414–G416 each bind GTP.

The protein belongs to the adenylosuccinate synthetase family. As to quaternary structure, homodimer. It depends on Mg(2+) as a cofactor.

It localises to the cytoplasm. The enzyme catalyses IMP + L-aspartate + GTP = N(6)-(1,2-dicarboxyethyl)-AMP + GDP + phosphate + 2 H(+). Its pathway is purine metabolism; AMP biosynthesis via de novo pathway; AMP from IMP: step 1/2. In terms of biological role, plays an important role in the de novo pathway of purine nucleotide biosynthesis. Catalyzes the first committed step in the biosynthesis of AMP from IMP. This chain is Adenylosuccinate synthetase, found in Caldicellulosiruptor saccharolyticus (strain ATCC 43494 / DSM 8903 / Tp8T 6331).